The sequence spans 127 residues: Fluoride-specific ion channel FluC (127 aa).

The next 4 helical transmembrane spans lie at Met1–Leu21, Phe39–Ile59, Leu72–Leu92, and Ala105–Met125. Na(+) contacts are provided by Gly79 and Thr82.

It belongs to the fluoride channel Fluc/FEX (TC 1.A.43) family.

The protein resides in the cell inner membrane. It catalyses the reaction fluoride(in) = fluoride(out). With respect to regulation, na(+) is not transported, but it plays an essential structural role and its presence is essential for fluoride channel function. In terms of biological role, fluoride-specific ion channel. Important for reducing fluoride concentration in the cell, thus reducing its toxicity. This is Fluoride-specific ion channel FluC from Alteromonas mediterranea (strain DSM 17117 / CIP 110805 / LMG 28347 / Deep ecotype).